A 264-amino-acid chain; its full sequence is Apolipoprotein A-I (264 aa).

The first 18 residues, 1–18 (MKAVVLAVAVLFLTGSQA), serve as a signal peptide directing secretion. 2 repeat units span residues 67-88 (LKLL…ADLG) and 89-110 (PVTQ…QEMN). Positions 67-264 (LKLLDNWDTL…DQATKQLTAQ (198 aa)) are 10 X approximate tandem repeats. Methionine 109 carries the post-translational modification Methionine sulfoxide. One copy of the 3; half-length repeat lies at 111–121 (KDLQEVKQKVQ). 5 repeat units span residues 122-143 (PYLD…EKVG), 144-165 (PLGT…EKLT), 166-187 (PLGE…TQLA), 188-207 (PYSD…LRDS), and 208-229 (TTFA…EKAK). The 9; half-length repeat unit spans residues 230 to 240 (PALEDLRQGLL). Repeat unit 10 spans residues 241–264 (PVLESLKASILSSIDQATKQLTAQ).

The protein belongs to the apolipoprotein A1/A4/E family. As to quaternary structure, homodimer. Interacts with APOA1BP and CLU. Component of a sperm activating protein complex (SPAP), consisting of APOA1, an immunoglobulin heavy chain, an immunoglobulin light chain and albumin. Interacts with NDRG1. Interacts with SCGB3A2. Interacts with NAXE and YJEFN3. Glycosylated. In terms of processing, palmitoylated. Post-translationally, phosphorylation sites are present in the extracellular medium.

It localises to the secreted. In terms of biological role, participates in the reverse transport of cholesterol from tissues to the liver for excretion by promoting cholesterol efflux from tissues and by acting as a cofactor for the lecithin cholesterol acyltransferase (LCAT). As part of the SPAP complex, activates spermatozoa motility. This chain is Apolipoprotein A-I (APOA1), found in Chinchilla lanigera (Long-tailed chinchilla).